Consider the following 179-residue polypeptide: Viral interleukin-10 homolog (179 aa).

A signal peptide spans 1–18; sequence MFRASLLCCLVLLAGVWA. 2 disulfide bridges follow: cysteine 30–cysteine 127 and cysteine 80–cysteine 133. Asparagine 100 and asparagine 135 each carry an N-linked (GlcNAc...) asparagine; by host glycan.

The protein belongs to the IL-10 family.

Its subcellular location is the secreted. Functionally, down-regulates the expression of the TAP1 gene (transporter associated with antigen processing), thereby affecting the transport of peptides into the endoplasmic reticulum and subsequent peptide loading by MHC class I molecules. In consequence, infected cells are masked for immune recognition by cytotoxic T-lymphocytes. This is Viral interleukin-10 homolog from Equus caballus (Horse).